We begin with the raw amino-acid sequence, 490 residues long: Apocarotenoid-15,15'-oxygenase (490 aa).

Fe cation is bound at residue His-183. Ser-206 contacts substrate. Position 238 (His-238) interacts with Fe cation. Phe-303 serves as a coordination point for substrate. The Fe cation site is built by His-304 and His-484.

Belongs to the carotenoid oxygenase family. Fe(2+) serves as cofactor.

It catalyses the reaction all-trans-8'-apo-beta-carotenal + O2 = (2E,4E,6E)-2,6-dimethylocta-2,4,6-trienedial + all-trans-retinal. Functionally, cleaves a number of carotenals and carotenols in the all-trans configuration at the 15-15' double bond producing retinal or retinol, respectively. Also shows activity toward lycopenals and the corresponding alcohols. Does not cleave beta-carotene or lycopene. The polypeptide is Apocarotenoid-15,15'-oxygenase (Synechocystis sp. (strain ATCC 27184 / PCC 6803 / Kazusa)).